The sequence spans 348 residues: MGCVQCKCCSRYPSSSSDGDSRGPLEANGVLKGKDQKPLGSIHVPSPNFDMVYSVLSQRGYYPDSPDKENQDTYCIKTELQGNPNVHFFGVFDGHGVLGTQCSNFVKERVVEMLSEDPTLLEDPEKAYKSAFLRVNEELHDSEIDDSMSGTTAITVLVVGDKIYVANVGDSRAVLAVKDRNRILAEDLSYDQTPFRKDECERVKACGARVLSVDQVEGLKDPNIQTWANEESEGGDPPRLWVQNGMYPGTAFTRSVGDFTAESIGVIAEPEVSMVHLSPNHLFFVVASDGIFEFLPSQAVVDMVGRYADPRDGCAAAAAESYKLWLEHENRTDDITIIIVQIKKLSNE.

Residues 11 to 24 (RYPSSSSDGDSRGP) are compositionally biased toward low complexity. The segment at 11–40 (RYPSSSSDGDSRGPLEANGVLKGKDQKPLG) is disordered. Residues 52–342 (VYSVLSQRGY…DDITIIIVQI (291 aa)) enclose the PPM-type phosphatase domain. Mn(2+)-binding residues include Asp-93, Gly-94, Asp-289, and Asp-333.

Belongs to the PP2C family. Requires Mg(2+) as cofactor. It depends on Mn(2+) as a cofactor.

It carries out the reaction O-phospho-L-seryl-[protein] + H2O = L-seryl-[protein] + phosphate. The catalysed reaction is O-phospho-L-threonyl-[protein] + H2O = L-threonyl-[protein] + phosphate. This is Probable protein phosphatase 2C 35 from Arabidopsis thaliana (Mouse-ear cress).